Consider the following 153-residue polypeptide: Ribosomal RNA large subunit methyltransferase H (153 aa).

Residues L70, G102, and 121 to 126 (LSAMTF) each bind S-adenosyl-L-methionine.

Belongs to the RNA methyltransferase RlmH family. In terms of assembly, homodimer.

It is found in the cytoplasm. The enzyme catalyses pseudouridine(1915) in 23S rRNA + S-adenosyl-L-methionine = N(3)-methylpseudouridine(1915) in 23S rRNA + S-adenosyl-L-homocysteine + H(+). Specifically methylates the pseudouridine at position 1915 (m3Psi1915) in 23S rRNA. The sequence is that of Ribosomal RNA large subunit methyltransferase H from Trichlorobacter lovleyi (strain ATCC BAA-1151 / DSM 17278 / SZ) (Geobacter lovleyi).